Here is a 217-residue protein sequence, read N- to C-terminus: Adenylate kinase (217 aa).

Gly-10–Thr-15 provides a ligand contact to ATP. The interval Ser-30–Val-59 is NMP. AMP contacts are provided by residues Thr-31, Arg-36, Gly-57 to Val-59, Gly-85 to Arg-88, and Gln-92. The tract at residues Gly-122 to Asp-159 is LID. Residues Arg-123 and Thr-132–Tyr-133 each bind ATP. Residues Arg-156 and Arg-167 each contribute to the AMP site. Gly-203 lines the ATP pocket.

The protein belongs to the adenylate kinase family. In terms of assembly, monomer.

The protein localises to the cytoplasm. The catalysed reaction is AMP + ATP = 2 ADP. It participates in purine metabolism; AMP biosynthesis via salvage pathway; AMP from ADP: step 1/1. Functionally, catalyzes the reversible transfer of the terminal phosphate group between ATP and AMP. Plays an important role in cellular energy homeostasis and in adenine nucleotide metabolism. The protein is Adenylate kinase of Azoarcus sp. (strain BH72).